Reading from the N-terminus, the 394-residue chain is GDNF family receptor alpha-like (394 aa).

A signal peptide spans 1 to 18 (MIVFIFLAMGLSLENEYT). Over 19–351 (SQTNNCTYLR…TGFHSPFNGE (333 aa)) the chain is Extracellular. Residues Asn-23, Asn-50, Asn-62, Asn-67, Asn-103, and Asn-116 are each glycosylated (N-linked (GlcNAc...) asparagine). Intrachain disulfides connect Cys-131–Cys-189, Cys-138–Cys-144, Cys-155–Cys-167, Cys-162–Cys-210, Cys-191–Cys-198, Cys-220–Cys-291, Cys-227–Cys-233, Cys-244–Cys-275, Cys-252–Cys-258, Cys-269–Cys-316, and Cys-293–Cys-304. Residues 149–228 (ASYLKACSAN…TCLSVIRSCQ (80 aa)) form a required for interaction with GDF15 region. A helical membrane pass occupies residues 352-371 (VIYAAMCMTVTCGILLLVMV). The Cytoplasmic segment spans residues 372 to 394 (KLRTSRISSKARDPSSIQIPGEL).

Belongs to the GDNFR family. Interacts (via the extracellular domain) with GDF15 and RET; receptor of GDF15, mediates cellular signaling through interaction with RET after GDF15-binding. Interaction with RET requires previous GDF15-binding. Cleaved and inactivated by MMP14, inhibiting the GDF15-GFRAL aversive response. As to expression, expressed in the brainstem, restricted to cells in the area postrema and the immediately adjacent region of the nucleus tractus solitarius (at protein level). Detected at low levels in testis and adipose tissue.

The protein localises to the cell membrane. Its activity is regulated as follows. Specifically inhibited by 3P10 monoclonal antibody. Strongly activated by LY3463251, a long-acting and stable agonist composed of GDF15 conjugated monomeric human IgG4 Fc. In terms of biological role, brainstem-restricted receptor for GDF15 hormone, which triggers an aversive response, characterized by nausea, vomiting, and/or loss of appetite in response to various stresses. The aversive response is both required to reduce continuing exposure to those stresses at the time of exposure and to promote avoidance behavior in the future. The GDF15-GFRAL aversive response is triggered by stresses, such as anticancer drugs (camptothecin or cisplatin), cancers or drugs such as metformin. Upon interaction with its ligand, GDF15, mediates the GDF15-induced autophosphorylation and activation of the RET tyrosine kinase receptor, leading to activation of MAPK- and AKT- signaling pathways. Ligand-binding activates GFRAL-expressing neurons localized in the area postrema and nucleus tractus solitarius of the brainstem. The GDF15-GFRAL signal induces expression of genes involved in metabolism, such as lipid metabolism in adipose tissues. The polypeptide is GDNF family receptor alpha-like (Homo sapiens (Human)).